A 671-amino-acid polypeptide reads, in one-letter code: Probable potassium transport system protein Kup (671 aa).

Positions 1–43 (MSQIPSPNDPASTGAAPSSAAVPAGPSATPAPSPTAGFSLPGH) are disordered. Positions 10–37 (PASTGAAPSSAAVPAGPSATPAPSPTAG) are enriched in low complexity. A run of 12 helical transmembrane segments spans residues 52–72 (LAAL…TSPL), 92–112 (VLGV…FKYM), 147–167 (LMLG…TPAI), 181–201 (PAME…LFLF), 209–229 (VGAV…VLGV), 255–275 (GWHG…GEAL), 291–311 (WLGL…ALLL), 323–343 (LLAP…AAIV), 381–401 (IYLP…VLGF), 407–427 (LASA…LLFH), 441–461 (AWPL…ANVV), and 465–485 (DGGW…STWK).

The protein belongs to the HAK/KUP transporter (TC 2.A.72) family.

It is found in the cell inner membrane. The enzyme catalyses K(+)(in) + H(+)(in) = K(+)(out) + H(+)(out). Transport of potassium into the cell. Likely operates as a K(+):H(+) symporter. The protein is Probable potassium transport system protein Kup of Anaeromyxobacter dehalogenans (strain 2CP-1 / ATCC BAA-258).